We begin with the raw amino-acid sequence, 852 residues long: GPI ethanolamine phosphate transferase 2 (852 aa).

Residues asparagine 191 and asparagine 420 are each glycosylated (N-linked (GlcNAc...) asparagine). A run of 3 helical transmembrane segments spans residues 458–478 (LIRL…TFFP), 486–506 (FAPA…MMFA), and 516–536 (FWYW…AGHF). Asparagine 576 is a glycosylation site (N-linked (GlcNAc...) asparagine). The next 6 helical transmembrane spans lie at 632 to 652 (LLYH…YSLY), 676 to 696 (TLTL…FLVF), 714 to 734 (TITS…SNAI), 750 to 770 (SVFI…IWWV), 787 to 807 (AHVT…MAAC), and 824 to 844 (YLYT…LGEI).

This sequence belongs to the PIGG/PIGN/PIGO family. PIGG subfamily.

The protein localises to the endoplasmic reticulum membrane. It functions in the pathway glycolipid biosynthesis; glycosylphosphatidylinositol-anchor biosynthesis. Its function is as follows. Ethanolamine phosphate transferase involved in glycosylphosphatidylinositol-anchor biosynthesis. Transfers ethanolamine phosphate to the GPI second mannose. The chain is GPI ethanolamine phosphate transferase 2 (las21) from Aspergillus oryzae (strain ATCC 42149 / RIB 40) (Yellow koji mold).